The sequence spans 433 residues: GTPase Obg (433 aa).

The Obg domain maps to 1-159; the sequence is MAITDYCECR…LNVSLEVKYL (159 aa). The OBG-type G domain maps to 160 to 329; sequence ANVGIVGFPN…LLDRVFELYN (170 aa). GTP-binding positions include 166–173, 191–195, 212–215, 282–285, and 310–312; these read GFPNSGKS, FTTLI, DIPG, NKID, and ISA. Mg(2+) is bound by residues Ser173 and Thr193. Residues 355–433 form the OCT domain; the sequence is TNENNNDPLN…FDGCEFVIND (79 aa).

Belongs to the TRAFAC class OBG-HflX-like GTPase superfamily. OBG GTPase family. In terms of assembly, monomer. Requires Mg(2+) as cofactor.

The protein resides in the cytoplasm. An essential GTPase which binds GTP, GDP and possibly (p)ppGpp with moderate affinity, with high nucleotide exchange rates and a fairly low GTP hydrolysis rate. Plays a role in control of the cell cycle, stress response, ribosome biogenesis and in those bacteria that undergo differentiation, in morphogenesis control. The polypeptide is GTPase Obg (Mycoplasma genitalium (strain ATCC 33530 / DSM 19775 / NCTC 10195 / G37) (Mycoplasmoides genitalium)).